We begin with the raw amino-acid sequence, 88 residues long: DASH complex subunit HSK3 (88 aa).

Low complexity predominate over residues 1–15; it reads MSSRGSGANAASRQS. The interval 1–24 is disordered; sequence MSSRGSGANAASRQSMTASGGAVK.

The protein belongs to the DASH complex HSK3 family. In terms of assembly, component of the DASH complex consisting of ASK1, DAD1, DAD2, DAD3, DAD4, DAM1, DUO1, HSK3, SPC19 and SPC34, with a stoichiometry of one copy of each subunit per complex. Multiple DASH complexes oligomerize to form a ring that encircles spindle microtubules and organizes the rod-like NDC80 complexes of the outer kinetochore. DASH complex oligomerization strengthens microtubule attachments. On cytoplasmic microtubules, DASH complexes appear to form patches instead of rings.

The protein localises to the nucleus. Its subcellular location is the cytoplasm. The protein resides in the cytoskeleton. It is found in the spindle. It localises to the chromosome. The protein localises to the centromere. Its subcellular location is the kinetochore. Its function is as follows. Component of the DASH complex that connects microtubules with kinetochores and couples microtubule depolymerisation to chromosome movement; it is involved in retrieving kinetochores to the spindle poles before their re-orientation on the spindle in early mitosis and allows microtubule depolymerization to pull chromosomes apart and resist detachment during anaphase. Kinetochores, consisting of a centromere-associated inner segment and a microtubule-contacting outer segment, play a crucial role in chromosome segregation by mediating the physical connection between centromeric DNA and microtubules. Kinetochores also serve as an input point for the spindle assembly checkpoint, which delays anaphase until all chromosomes have bioriented on the mitotic spindle. The protein is DASH complex subunit HSK3 of Chaetomium thermophilum (strain DSM 1495 / CBS 144.50 / IMI 039719) (Thermochaetoides thermophila).